Consider the following 463-residue polypeptide: Argininosuccinate lyase (463 aa).

It belongs to the lyase 1 family. Argininosuccinate lyase subfamily.

It localises to the cytoplasm. It catalyses the reaction 2-(N(omega)-L-arginino)succinate = fumarate + L-arginine. Its pathway is amino-acid biosynthesis; L-arginine biosynthesis; L-arginine from L-ornithine and carbamoyl phosphate: step 3/3. This is Argininosuccinate lyase from Methylorubrum extorquens (strain CM4 / NCIMB 13688) (Methylobacterium extorquens).